Consider the following 342-residue polypeptide: MTNLTLALDAMGGDFGPRITVPATLQALRLYPFLHVIMVGDRSQIEPLLSHLESDLLSRIELVHTTEVVKMCDRPVHALRNCKQSSMRLAIELVRDKKAQACLSAGNTGALMAISKVLLKTLPGIDRPALVSCLPAVNHKPVYLLDLGANVSCCSETLFQFAVMGSVLCEAVDKNPAPKVALLNVGIEEIKGNDQVQQAGQLLQQSPQLNYAGFIEGDDIYSGNVDVIVCDGFVGNITLKTSEGIARLLVHQLKKGLTQGFFVRLLAKLIAPRINSVLNQMNPDHYNGASLIGLRGIVVKSHGSADESAYLQAISLAVTEAQRRLPKMIEERLESILLDINN.

It belongs to the PlsX family. As to quaternary structure, homodimer. Probably interacts with PlsY.

The protein localises to the cytoplasm. It carries out the reaction a fatty acyl-[ACP] + phosphate = an acyl phosphate + holo-[ACP]. Its pathway is lipid metabolism; phospholipid metabolism. Functionally, catalyzes the reversible formation of acyl-phosphate (acyl-PO(4)) from acyl-[acyl-carrier-protein] (acyl-ACP). This enzyme utilizes acyl-ACP as fatty acyl donor, but not acyl-CoA. The sequence is that of Phosphate acyltransferase from Shewanella loihica (strain ATCC BAA-1088 / PV-4).